Reading from the N-terminus, the 115-residue chain is Large ribosomal subunit protein bL19 (115 aa).

Belongs to the bacterial ribosomal protein bL19 family.

This protein is located at the 30S-50S ribosomal subunit interface and may play a role in the structure and function of the aminoacyl-tRNA binding site. The sequence is that of Large ribosomal subunit protein bL19 from Sodalis glossinidius (strain morsitans).